Consider the following 1126-residue polypeptide: Ubiquitin carboxyl-terminal hydrolase 16/45 (1126 aa).

Over residues 1–15 (MVKKRQADSRDHDCS) the composition is skewed to basic and acidic residues. Positions 1–44 (MVKKRQADSRDHDCSTDSGNEDLHHRKGLGSPGQSDGATPTTAS) are disordered. Residues 32-44 (PGQSDGATPTTAS) show a composition bias toward polar residues. Residues 43-181 (ASCQHIKKAV…ELVKKLAQKP (139 aa)) form a UBP-type zinc finger. 12 residues coordinate Zn(2+): Cys45, His47, Cys70, Cys73, Cys111, Cys114, Cys119, His126, His130, His139, Cys152, and Cys155. 2 stretches are compositionally biased toward low complexity: residues 215–229 (GGSF…SLAA) and 254–264 (SSGLSTSDSLT). The segment at 215–264 (GGSFDDSSSRGSLAAAGGGGGVGSSRNRQVAIPMPPPEPSSGLSTSDSLT) is disordered. The active-site Nucleophile is Cys315. Disordered regions lie at residues 513–547 (KPQP…INTK), 570–762 (ASLG…SGSS), and 795–833 (EQGA…ARTK). The span at 524-539 (PELSLTSSSSSVTPST) shows a compositional bias: low complexity. Residues 586–598 (QRKAKRAAKKRQK) are compositionally biased toward basic residues. 2 stretches are compositionally biased toward low complexity: residues 599-614 (SSLN…GNEL) and 646-657 (TEDSTTSSVTTS). Residues 674-701 (APSTNNVPSSTASLTAPSKTYMDSNGNA) are compositionally biased toward polar residues. Residues 705-718 (GEKRDDTPEHMDKD) are compositionally biased toward basic and acidic residues. Positions 730–762 (ATSPAPTATNSSTSTSATGNNNSVAGSGLSGSS) are enriched in low complexity. Basic and acidic residues predominate over residues 807–816 (GEAKAIEQPE). Over residues 821-830 (QAQAMAQAQA) the composition is skewed to low complexity. Catalysis depends on His984, which acts as the Proton acceptor. Residues 1037–1089 (LKVLDDSDDFSNSSSNSSTSDESQTPATPLEEQQTQQAQQPQQPQQLEEAANV) are disordered. The span at 1046–1086 (FSNSSSNSSTSDESQTPATPLEEQQTQQAQQPQQPQQLEEA) shows a compositional bias: low complexity.

It belongs to the peptidase C19 family.

The catalysed reaction is Thiol-dependent hydrolysis of ester, thioester, amide, peptide and isopeptide bonds formed by the C-terminal Gly of ubiquitin (a 76-residue protein attached to proteins as an intracellular targeting signal).. Functionally, involved in the regulation of DNA damage repair. The polypeptide is Ubiquitin carboxyl-terminal hydrolase 16/45 (Drosophila melanogaster (Fruit fly)).